Here is a 303-residue protein sequence, read N- to C-terminus: MDPLEDVLTLLKTRSHLSASLVAGGRWAVVFDAPQVLKFNAVRRGACLLKVDGDDEPIDLAEGDCYLLTRPRSFTLCSDLEAAPSDGGAVFARAEDGIARAGQGDDVFLIGGGFSFATHAQELLLDNLPPVVHVPAGTPHAEAVQWALTAIDQELTHQPMASTLVAEHLAVVMLIHVLRLHLERAPDAVSGWLAGLADPVVASALTFLHRDPAHSWTVAELASAAAVSRSTLAARFKATVGQGPLEYLTRWRIELTARQLREGSAPLAAIAHSVGYGSESALSVAFKRVLGMNPGDYRKHPMP.

Residues 202–300 (ASALTFLHRD…GMNPGDYRKH (99 aa)) form the HTH araC/xylS-type domain. DNA-binding regions (H-T-H motif) lie at residues 219–240 (AELA…KATV) and 267–290 (LAAI…KRVL).

The polypeptide is Putative AraC-like transcription regulator (Streptomyces antibioticus).